The chain runs to 180 residues: Large ribosomal subunit protein uL5 (180 aa).

This sequence belongs to the universal ribosomal protein uL5 family. In terms of assembly, part of the 50S ribosomal subunit; part of the 5S rRNA/L5/L18/L25 subcomplex. Contacts the 5S rRNA and the P site tRNA. Forms a bridge to the 30S subunit in the 70S ribosome.

This is one of the proteins that bind and probably mediate the attachment of the 5S RNA into the large ribosomal subunit, where it forms part of the central protuberance. In the 70S ribosome it contacts protein S13 of the 30S subunit (bridge B1b), connecting the 2 subunits; this bridge is implicated in subunit movement. Contacts the P site tRNA; the 5S rRNA and some of its associated proteins might help stabilize positioning of ribosome-bound tRNAs. In Roseiflexus sp. (strain RS-1), this protein is Large ribosomal subunit protein uL5.